A 156-amino-acid chain; its full sequence is Ribosome maturation factor RimP (156 aa).

The protein belongs to the RimP family.

The protein resides in the cytoplasm. Required for maturation of 30S ribosomal subunits. The sequence is that of Ribosome maturation factor RimP from Shouchella clausii (strain KSM-K16) (Alkalihalobacillus clausii).